The sequence spans 541 residues: DNA ligase 1 (541 aa).

Glu-234 is an ATP binding site. Lys-236 acts as the N6-AMP-lysine intermediate in catalysis. The ATP site is built by Arg-241, Arg-256, Glu-286, Phe-325, Arg-398, and Lys-404.

Belongs to the ATP-dependent DNA ligase family. The cofactor is Mg(2+).

The enzyme catalyses ATP + (deoxyribonucleotide)n-3'-hydroxyl + 5'-phospho-(deoxyribonucleotide)m = (deoxyribonucleotide)n+m + AMP + diphosphate.. Functionally, DNA ligase that seals nicks in double-stranded DNA during DNA replication, DNA recombination and DNA repair. The chain is DNA ligase 1 from Korarchaeum cryptofilum (strain OPF8).